Reading from the N-terminus, the 347-residue chain is Guanine nucleotide-binding protein subunit beta (347 aa).

7 WD repeats span residues 60-90, 102-132, 148-177, 189-219, 231-261, 275-305, and 317-347; these read GHLAKIYAMHWAEDNVHLVSASQDGKLLVWD, LRSSWVMTCAYSPTANFVACGGLDNICSIYN, SHTGYLSCCRFLNDRQIVTSSGDMTCILWD, DHNGDVMSVSVSPDKNYFISGACDATAKLWD, GHEADINAVQYFPNGLSFGTGSDDASCRLFD, NILCGITSVGFSFSGRFLFAGYDDFTCNVWD, and GHGNRVSCLGVPTDGMALCTGSWDSLLKIWA.

This sequence belongs to the WD repeat G protein beta family. In terms of assembly, g proteins are composed of 3 units, alpha, beta and gamma. Interacts with gpgA, and this requires phlp1.

It localises to the cytoplasm. Its subcellular location is the cell membrane. Functionally, guanine nucleotide-binding proteins (G proteins) are involved as a modulator or transducer in various transmembrane signaling systems. The beta and gamma chains are required for the GTPase activity, for replacement of GDP by GTP, and for G protein-effector interaction. Required for normal chemotaxis in response to cAMP and for aggregation during scorocarp development. The polypeptide is Guanine nucleotide-binding protein subunit beta (gpbA) (Dictyostelium discoideum (Social amoeba)).